The primary structure comprises 92 residues: MARSLKKGPFVDDHLMSKMEKLVASEQKQVVKTWSRRSTIFPQFIGHTIAVYDGRKHVPVYITEDMVGHKLGEFAPTRTYKGHLADDKKTRR.

It belongs to the universal ribosomal protein uS19 family.

In terms of biological role, protein S19 forms a complex with S13 that binds strongly to the 16S ribosomal RNA. This Bacillus cereus (strain B4264) protein is Small ribosomal subunit protein uS19.